Reading from the N-terminus, the 150-residue chain is Large ribosomal subunit protein bL9 (150 aa).

Belongs to the bacterial ribosomal protein bL9 family.

Functionally, binds to the 23S rRNA. This chain is Large ribosomal subunit protein bL9, found in Neisseria meningitidis serogroup C / serotype 2a (strain ATCC 700532 / DSM 15464 / FAM18).